Consider the following 701-residue polypeptide: Potassium-transporting ATPase ATP-binding subunit (701 aa).

Residues 1–28 are disordered; it reads MNPDAPTPKNKSSRSRPSDRPQARKKAK. The next 4 membrane-spanning stretches (helical) occupy residues 57–77, 90–110, 245–265, and 276–296; these read MFLVWVGTIITLSVTIEPNLF, GILTGILFFTVWFANFAEAVA, VLLAVLSLVFLFVVATLPVFA, and ILVALLVALIPTTIGGLLSAI. The active-site 4-aspartylphosphate intermediate is the aspartate 329. ATP-binding positions include aspartate 366, glutamate 370, 397–404, and lysine 416; that span reads FSAKTRMS. The Mg(2+) site is built by aspartate 539 and aspartate 543. 3 helical membrane passes run 599–619, 635–655, and 681–701; these read FSLANDIAKYFAIIPVIFASA, AVLSALIYNALIIPALIPLAL, and VIAPFIAIKLIDVLITLVGLA.

This sequence belongs to the cation transport ATPase (P-type) (TC 3.A.3) family. Type IA subfamily. The system is composed of three essential subunits: KdpA, KdpB and KdpC.

Its subcellular location is the cell membrane. It catalyses the reaction K(+)(out) + ATP + H2O = K(+)(in) + ADP + phosphate + H(+). Its function is as follows. Part of the high-affinity ATP-driven potassium transport (or Kdp) system, which catalyzes the hydrolysis of ATP coupled with the electrogenic transport of potassium into the cytoplasm. This subunit is responsible for energy coupling to the transport system and for the release of the potassium ions to the cytoplasm. The polypeptide is Potassium-transporting ATPase ATP-binding subunit (Anabaena sp. (strain L31)).